The sequence spans 226 residues: UPF0111 protein PH0637 (226 aa).

This sequence belongs to the UPF0111 family.

The sequence is that of UPF0111 protein PH0637 from Pyrococcus horikoshii (strain ATCC 700860 / DSM 12428 / JCM 9974 / NBRC 100139 / OT-3).